The primary structure comprises 24 residues: Coenzyme PQQ synthesis protein A (24 aa).

Residues 16–20 (EITMY) constitute a cross-link (pyrroloquinoline quinone (Glu-Tyr)).

The protein belongs to the PqqA family.

The protein operates within cofactor biosynthesis; pyrroloquinoline quinone biosynthesis. Its function is as follows. Required for coenzyme pyrroloquinoline quinone (PQQ) biosynthesis. PQQ is probably formed by cross-linking a specific glutamate to a specific tyrosine residue and excising these residues from the peptide. The sequence is that of Coenzyme PQQ synthesis protein A from Burkholderia cenocepacia (strain ATCC BAA-245 / DSM 16553 / LMG 16656 / NCTC 13227 / J2315 / CF5610) (Burkholderia cepacia (strain J2315)).